Consider the following 240-residue polypeptide: Ubiquinone biosynthesis O-methyltransferase (240 aa).

Residues Arg-44, Gly-64, Asp-85, and Met-129 each coordinate S-adenosyl-L-methionine.

The protein belongs to the methyltransferase superfamily. UbiG/COQ3 family.

The catalysed reaction is a 3-demethylubiquinol + S-adenosyl-L-methionine = a ubiquinol + S-adenosyl-L-homocysteine + H(+). The enzyme catalyses a 3-(all-trans-polyprenyl)benzene-1,2-diol + S-adenosyl-L-methionine = a 2-methoxy-6-(all-trans-polyprenyl)phenol + S-adenosyl-L-homocysteine + H(+). The protein operates within cofactor biosynthesis; ubiquinone biosynthesis. O-methyltransferase that catalyzes the 2 O-methylation steps in the ubiquinone biosynthetic pathway. The sequence is that of Ubiquinone biosynthesis O-methyltransferase from Escherichia coli (strain UTI89 / UPEC).